The following is a 340-amino-acid chain: Phenylalanine--tRNA ligase alpha subunit (340 aa).

Residue glutamate 251 participates in Mg(2+) binding.

It belongs to the class-II aminoacyl-tRNA synthetase family. Phe-tRNA synthetase alpha subunit type 1 subfamily. In terms of assembly, tetramer of two alpha and two beta subunits. It depends on Mg(2+) as a cofactor.

It localises to the cytoplasm. It catalyses the reaction tRNA(Phe) + L-phenylalanine + ATP = L-phenylalanyl-tRNA(Phe) + AMP + diphosphate + H(+). The protein is Phenylalanine--tRNA ligase alpha subunit of Porphyromonas gingivalis (strain ATCC 33277 / DSM 20709 / CIP 103683 / JCM 12257 / NCTC 11834 / 2561).